We begin with the raw amino-acid sequence, 418 residues long: Transcription termination factor Rho (418 aa).

Residues 48–123 (SIFGEGTLEV…VKVDKVNGEA (76 aa)) enclose the Rho RNA-BD domain. ATP contacts are provided by residues 169 to 174 (GKGQRA), 181 to 186 (KSGKTV), and arginine 212.

Belongs to the Rho family. Homohexamer. The homohexamer assembles into an open ring structure.

Functionally, facilitates transcription termination by a mechanism that involves Rho binding to the nascent RNA, activation of Rho's RNA-dependent ATPase activity, and release of the mRNA from the DNA template. The sequence is that of Transcription termination factor Rho from Chromobacterium violaceum (strain ATCC 12472 / DSM 30191 / JCM 1249 / CCUG 213 / NBRC 12614 / NCIMB 9131 / NCTC 9757 / MK).